We begin with the raw amino-acid sequence, 630 residues long: Pentatricopeptide repeat-containing protein At2g03880, mitochondrial (630 aa).

The N-terminal 76 residues, 1-76 (MKSVMSKIKL…LIKCCISNRA (76 aa)), are a transit peptide targeting the mitochondrion. PPR repeat units follow at residues 60–94 (DSAT…GHRP), 95–125 (MMFL…MPQR), 126–160 (NVIS…NVRP), 161–192 (NVYT…GLES), 193–223 (DVFV…MVTG), 224–258 (DAIV…GFIA), 259–289 (EQAT…IVKY), 292–322 (DLIL…MKER), 323–357 (DVIT…GTKP), 358–388 (NYIT…MKKL), and 394–424 (VREH…MECE). The type E motif stretch occupies residues 429-504 (TWRTLLGACR…EPGCSWIEVN (76 aa)). The tract at residues 505–535 (KQIHAFIIGDNSHPQIVEVSKKLNQLIHRLT) is type E(+) motif. The interval 536–630 (GIGYVPETNF…DGKCSCGDYW (95 aa)) is type DYW motif.

Belongs to the PPR family. PCMP-H subfamily.

Its subcellular location is the mitochondrion. This is Pentatricopeptide repeat-containing protein At2g03880, mitochondrial (PCMP-H44) from Arabidopsis thaliana (Mouse-ear cress).